The chain runs to 437 residues: UDP-N-acetylmuramate--L-alanine ligase (437 aa).

108–114 provides a ligand contact to ATP; that stretch reads GAHGKTS.

This sequence belongs to the MurCDEF family.

It localises to the cytoplasm. The catalysed reaction is UDP-N-acetyl-alpha-D-muramate + L-alanine + ATP = UDP-N-acetyl-alpha-D-muramoyl-L-alanine + ADP + phosphate + H(+). It functions in the pathway cell wall biogenesis; peptidoglycan biosynthesis. In terms of biological role, cell wall formation. The protein is UDP-N-acetylmuramate--L-alanine ligase of Lysinibacillus sphaericus (strain C3-41).